Here is an 80-residue protein sequence, read N- to C-terminus: Adipogenin (80 aa).

A helical membrane pass occupies residues 16 to 36; sequence FLVFWLCLPVALLLFLTIVWL. Ser-63 carries the post-translational modification Phosphoserine.

It belongs to the adipogenin family. In terms of tissue distribution, selectively expressed in adipose tissue where it is particularly enriched in brown adipose tissue. In adipose tissue, expressed exclusively in adipocytes and not in the stromal-vascular cell population. Expressed at much lower levels in heart, stomach and muscle and barely detected in kidney and lung.

It localises to the membrane. Its subcellular location is the nucleus. In terms of biological role, plays a role in stimulating adipocyte differentiation and development. This is Adipogenin (Adig) from Mus musculus (Mouse).